The sequence spans 283 residues: 4-diphosphocytidyl-2-C-methyl-D-erythritol kinase (283 aa).

Lys10 is an active-site residue. 99-109 (PMGGGLGGGSS) contributes to the ATP binding site. Residue Asp141 is part of the active site.

It belongs to the GHMP kinase family. IspE subfamily. In terms of assembly, homodimer.

It carries out the reaction 4-CDP-2-C-methyl-D-erythritol + ATP = 4-CDP-2-C-methyl-D-erythritol 2-phosphate + ADP + H(+). The protein operates within isoprenoid biosynthesis; isopentenyl diphosphate biosynthesis via DXP pathway; isopentenyl diphosphate from 1-deoxy-D-xylulose 5-phosphate: step 3/6. Catalyzes the phosphorylation of the position 2 hydroxy group of 4-diphosphocytidyl-2C-methyl-D-erythritol. The polypeptide is 4-diphosphocytidyl-2-C-methyl-D-erythritol kinase (Escherichia coli (strain 55989 / EAEC)).